The following is a 65-amino-acid chain: MKIAEIRELSTKELLERVDAEVAAYDQKKINHSISPMDNPSQIKQQRRLIARMKTELRQRELNNK.

The protein belongs to the universal ribosomal protein uL29 family.

The polypeptide is Large ribosomal subunit protein uL29 (Parabacteroides distasonis (strain ATCC 8503 / DSM 20701 / CIP 104284 / JCM 5825 / NCTC 11152)).